Reading from the N-terminus, the 472-residue chain is Carboxypeptidase Q (472 aa).

The first 20 residues, 1-20 (MKFLIFAFFGGVHLLSLCSG), serve as a signal peptide directing secretion. Positions 21–44 (KAIYKNGISKRTFEEIKEEIASYG) are excised as a propeptide. Residues asparagine 61 and asparagine 179 are each glycosylated (N-linked (GlcNAc...) asparagine). The Zn(2+) site is built by histidine 290 and aspartate 302. The active-site Nucleophile is glutamate 336. Residue glutamate 337 participates in Zn(2+) binding. N-linked (GlcNAc...) asparagine glycans are attached at residues asparagine 353 and asparagine 356. Aspartate 364 contacts Zn(2+). The N-linked (GlcNAc...) asparagine glycan is linked to asparagine 396. Histidine 434 is a binding site for Zn(2+).

This sequence belongs to the peptidase M28 family. Homodimer. The monomeric form is inactive while the homodimer is active. N-glycosylated. The secreted form is modified by hybrid or complex type oligosaccharide chains.

Its subcellular location is the endoplasmic reticulum. The protein localises to the golgi apparatus. It is found in the lysosome. The protein resides in the secreted. Its function is as follows. Carboxypeptidase that may play an important role in the hydrolysis of circulating peptides. Catalyzes the hydrolysis of dipeptides with unsubstituted terminals into amino acids. May play a role in the liberation of thyroxine hormone from its thyroglobulin (Tg) precursor. The polypeptide is Carboxypeptidase Q (CPQ) (Pongo abelii (Sumatran orangutan)).